We begin with the raw amino-acid sequence, 305 residues long: Phosphoribosylaminoimidazole-succinocarboxamide synthase (305 aa).

The protein belongs to the SAICAR synthetase family.

The catalysed reaction is 5-amino-1-(5-phospho-D-ribosyl)imidazole-4-carboxylate + L-aspartate + ATP = (2S)-2-[5-amino-1-(5-phospho-beta-D-ribosyl)imidazole-4-carboxamido]succinate + ADP + phosphate + 2 H(+). The protein operates within purine metabolism; IMP biosynthesis via de novo pathway; 5-amino-1-(5-phospho-D-ribosyl)imidazole-4-carboxamide from 5-amino-1-(5-phospho-D-ribosyl)imidazole-4-carboxylate: step 1/2. The polypeptide is Phosphoribosylaminoimidazole-succinocarboxamide synthase (Tropheryma whipplei (strain Twist) (Whipple's bacillus)).